Reading from the N-terminus, the 519-residue chain is Galactose-1-phosphate uridylyltransferase (519 aa).

The protein belongs to the galactose-1-phosphate uridylyltransferase type 2 family.

Its subcellular location is the cytoplasm. The enzyme catalyses alpha-D-galactose 1-phosphate + UDP-alpha-D-glucose = alpha-D-glucose 1-phosphate + UDP-alpha-D-galactose. It functions in the pathway carbohydrate metabolism; galactose metabolism. The protein is Galactose-1-phosphate uridylyltransferase of Caldanaerobacter subterraneus subsp. tengcongensis (strain DSM 15242 / JCM 11007 / NBRC 100824 / MB4) (Thermoanaerobacter tengcongensis).